The primary structure comprises 81 residues: Putative membrane protein insertion efficiency factor (81 aa).

Residues 61–81 (NPGGYDPVPPIPTSRSSSMAE) are disordered.

The protein belongs to the UPF0161 family.

Its subcellular location is the cell inner membrane. Could be involved in insertion of integral membrane proteins into the membrane. The chain is Putative membrane protein insertion efficiency factor from Pseudomonas fluorescens (strain Pf0-1).